A 278-amino-acid chain; its full sequence is MQIMLCAISNIASGNCSEDCKYCTQSAHVKTDIQKYRRKELSQIVLEAKMAKKNEALGFCLVTAGLGLDDEKLEYVCEAAKAVQKEVPNLLLIACNGMASVEQLKELKKAGIFSYNHNLESSKEFFPQICTTHTWESRFQTNLNAKEAGLMLCCGGIYGMGESEEDRLSFRKSLQELQPFSTPINFFIANENLKLQVPRLSADEALKIVRDTKEALPQSVVMVAGGREVVLRERQYEIFQAGAGAIVIGDYLTTKGEEPSQDIIKLKEMGFTFASECH.

The region spanning 1–227 is the Radical SAM core domain; that stretch reads MQIMLCAISN…QSVVMVAGGR (227 aa). [4Fe-4S] cluster-binding residues include C16, C20, and C23. 3 residues coordinate [2Fe-2S] cluster: C60, N96, and C154.

It belongs to the radical SAM superfamily. Biotin synthase family. Homodimer. It depends on [4Fe-4S] cluster as a cofactor. [2Fe-2S] cluster is required as a cofactor.

It catalyses the reaction (4R,5S)-dethiobiotin + (sulfur carrier)-SH + 2 reduced [2Fe-2S]-[ferredoxin] + 2 S-adenosyl-L-methionine = (sulfur carrier)-H + biotin + 2 5'-deoxyadenosine + 2 L-methionine + 2 oxidized [2Fe-2S]-[ferredoxin]. It functions in the pathway cofactor biosynthesis; biotin biosynthesis; biotin from 7,8-diaminononanoate: step 2/2. Its function is as follows. Catalyzes the conversion of dethiobiotin (DTB) to biotin by the insertion of a sulfur atom into dethiobiotin via a radical-based mechanism. The polypeptide is Biotin synthase (Campylobacter jejuni subsp. jejuni serotype O:2 (strain ATCC 700819 / NCTC 11168)).